A 579-amino-acid chain; its full sequence is Protein O-linked-mannose beta-1,4-N-acetylglucosaminyltransferase 2 (579 aa).

Residues 1 to 4 (MGVG) are Cytoplasmic-facing. Residues 5-25 (TLLNGLLVSVVAALLWKYSKL) form a helical; Signal-anchor for type II membrane protein membrane-spanning segment. At 26–579 (SEHAALLEEE…PFADVLMCRT (554 aa)) the chain is on the lumenal side. Residues asparagine 98, asparagine 275, and asparagine 542 are each glycosylated (N-linked (GlcNAc...) asparagine). Residues 480–579 (HPGRVRDARC…PFADVLMCRT (100 aa)) form the Fibronectin type-III domain.

The protein belongs to the glycosyltransferase 61 family.

Its subcellular location is the endoplasmic reticulum membrane. The catalysed reaction is 3-O-(alpha-D-mannosyl)-L-threonyl-[protein] + UDP-N-acetyl-alpha-D-glucosamine = 3-O-(N-acetyl-beta-D-glucosaminyl-(1-&gt;4)-alpha-D-mannosyl)-L-threonyl-[protein] + UDP + H(+). It participates in protein modification; protein glycosylation. In terms of biological role, O-linked mannose beta-1,4-N-acetylglucosaminyltransferase that transfers UDP-N-acetyl-D-glucosamine to the 4-position of the mannose to generate N-acetyl-D-glucosamine-beta-1,4-O-D-mannosylprotein. Involved in the biosynthesis of the phosphorylated O-mannosyl trisaccharide (N-acetylgalactosamine-beta-3-N-acetylglucosamine-beta-4-(phosphate-6-)mannose), a carbohydrate structure present in alpha-dystroglycan (DAG1), which is required for binding laminin G-like domain-containing extracellular proteins with high affinity. The sequence is that of Protein O-linked-mannose beta-1,4-N-acetylglucosaminyltransferase 2 (pomgnt2) from Tetraodon nigroviridis (Spotted green pufferfish).